A 385-amino-acid polypeptide reads, in one-letter code: Putative transport protein MT1133 (385 aa).

8 helical membrane-spanning segments follow: residues 7 to 27, 32 to 52, 66 to 86, 159 to 179, 218 to 238, 241 to 261, 263 to 283, and 319 to 339; these read LTQKRALAILTLIALLFGAYF, FVLIVVAAVGAYLFTPLFKWF, LLSALAAVVVPVGALVGLAIV, SLAGVITSAIIFVYVFVALLV, FVIAACQGVAGAASIYIAGFH, FFIFAIVLTALSIIPLGGGIV, IPFGIGMIFYGNIAGGIFVLL, and GITMFGPWGIIIGPVLMILIV.

Belongs to the autoinducer-2 exporter (AI-2E) (TC 2.A.86) family.

The protein resides in the cell membrane. This is Putative transport protein MT1133 from Mycobacterium tuberculosis (strain CDC 1551 / Oshkosh).